A 291-amino-acid chain; its full sequence is Homoserine kinase (291 aa).

80 to 90 serves as a coordination point for ATP; it reads RPASGLGSSAA.

This sequence belongs to the GHMP kinase family. Homoserine kinase subfamily.

The protein resides in the cytoplasm. The enzyme catalyses L-homoserine + ATP = O-phospho-L-homoserine + ADP + H(+). It participates in amino-acid biosynthesis; L-threonine biosynthesis; L-threonine from L-aspartate: step 4/5. Catalyzes the ATP-dependent phosphorylation of L-homoserine to L-homoserine phosphate. The sequence is that of Homoserine kinase from Natronomonas pharaonis (strain ATCC 35678 / DSM 2160 / CIP 103997 / JCM 8858 / NBRC 14720 / NCIMB 2260 / Gabara) (Halobacterium pharaonis).